A 299-amino-acid polypeptide reads, in one-letter code: Nucleotide-binding protein glr4163 (299 aa).

Residue 18 to 25 coordinates ATP; it reads SPAGAGRT.

This sequence belongs to the RapZ-like family.

Displays ATPase and GTPase activities. The sequence is that of Nucleotide-binding protein glr4163 from Gloeobacter violaceus (strain ATCC 29082 / PCC 7421).